The sequence spans 302 residues: Large ribosomal subunit protein uL29m (302 aa).

Residues 1–38 constitute a mitochondrion transit peptide; it reads MASSGAARPAASRVLQRCQPFSSSTSCAAPVTTWRTLA. The interval 255–302 is disordered; sequence EPVADHLETPETSGQEKVGELSPAGAVDPSTILASKTGKPVTDAPRSS.

This sequence belongs to the universal ribosomal protein uL29 family. In terms of assembly, component of the mitochondrial large ribosomal subunit. Mature mitochondrial ribosomes consist of a small (37S) and a large (54S) subunit. The 37S subunit contains at least 33 different proteins and 1 molecule of RNA (15S). The 54S subunit contains at least 45 different proteins and 1 molecule of RNA (21S).

It is found in the mitochondrion. The sequence is that of Large ribosomal subunit protein uL29m (MRPL4) from Pyricularia oryzae (strain 70-15 / ATCC MYA-4617 / FGSC 8958) (Rice blast fungus).